A 348-amino-acid chain; its full sequence is 4-hydroxyphenylpyruvate dioxygenase (348 aa).

2 consecutive VOC domains span residues 11–141 and 151–303; these read GFAF…ITSS and AIDH…IFTE. Fe cation-binding residues include histidine 154, histidine 232, and glutamate 312.

The protein belongs to the 4HPPD family. Requires Fe cation as cofactor.

The enzyme catalyses 3-(4-hydroxyphenyl)pyruvate + O2 = homogentisate + CO2. Its function is as follows. Catalyzes the transformation of p-hydroxyphenylpyruvate into HGA. Has hemolytic and brown pigment production activity. The chain is 4-hydroxyphenylpyruvate dioxygenase (lly) from Legionella pneumophila (strain Corby).